Here is a 300-residue protein sequence, read N- to C-terminus: 2-dehydropantoate 2-reductase (300 aa).

NADP(+) is bound by residues 7 to 12 (GAGAIG), lysine 74, asparagine 99, and alanine 123. Lysine 179 (proton donor) is an active-site residue. Residues lysine 179, asparagine 183, asparagine 187, asparagine 197, and 246–249 (NYNS) each bind substrate. Glutamate 261 lines the NADP(+) pocket.

Belongs to the ketopantoate reductase family.

The protein localises to the cytoplasm. It carries out the reaction (R)-pantoate + NAD(+) = 2-dehydropantoate + NADH + H(+). The enzyme catalyses (R)-pantoate + NADP(+) = 2-dehydropantoate + NADPH + H(+). It participates in cofactor biosynthesis; coenzyme A biosynthesis. Catalyzes the NAD(P)H-dependent reduction of ketopantoate into pantoic acid. The chain is 2-dehydropantoate 2-reductase (apbA) from Pyrococcus abyssi (strain GE5 / Orsay).